The sequence spans 1874 residues: Protein TIC 214 (1874 aa).

The next 6 membrane-spanning stretches (helical) occupy residues 18–38 (IINS…FSIG), 64–84 (FITG…HLAL), 87–107 (PHTI…WNNH), 124–144 (LSIQ…YFIL), 172–192 (VGWL…LVWI), and 221–241 (IFSI…PSPI). 2 disordered regions span residues 248-310 (ETSK…EIRV) and 1567-1624 (KTEC…NEED). Acidic residues predominate over residues 255 to 268 (GVESEEEGDVEIET). Composition is skewed to basic and acidic residues over residues 298–310 (DSNK…EIRV) and 1584–1601 (NQKE…RSDA).

The protein belongs to the TIC214 family. In terms of assembly, part of the Tic complex.

The protein localises to the plastid. Its subcellular location is the chloroplast inner membrane. In terms of biological role, involved in protein precursor import into chloroplasts. May be part of an intermediate translocation complex acting as a protein-conducting channel at the inner envelope. This is Protein TIC 214 from Coffea arabica (Arabian coffee).